The following is a 324-amino-acid chain: MKQVNGQKLLDALGNGVSAIRGRITPDAPMDRVTWFRAGGLAELMFQPHDTDDLVAFLKLVPEEVPVMVIGVGSNLLVRDGGIPGVVIRLSAKGFGDLEIVGENRIKAGAICPDKNIAAMALDHGIGGFYFYYGIPGSIGGALRMNAGANGGETRERVVEVHAVDRRGNRHVLSNADMGYSYRHTAAAKDLIFTHAIFEGFPEDKAKIRHDMDAVRQHRETVQPIREKTGGSTFKNPEGNSAWKLIDEAGGRGMMIGGAQMSPLHCNFMINTGQASGYELEYLGETVRAQVLEHSGIKLEWEIKRIGKFMPGYEIKEFLGRADG.

The 168-residue stretch at Phe36–Glu203 folds into the FAD-binding PCMH-type domain. Residue Arg183 is part of the active site. The active-site Proton donor is the Ser232. Residue Glu302 is part of the active site.

Belongs to the MurB family. FAD serves as cofactor.

The protein resides in the cytoplasm. The catalysed reaction is UDP-N-acetyl-alpha-D-muramate + NADP(+) = UDP-N-acetyl-3-O-(1-carboxyvinyl)-alpha-D-glucosamine + NADPH + H(+). Its pathway is cell wall biogenesis; peptidoglycan biosynthesis. Functionally, cell wall formation. The protein is UDP-N-acetylenolpyruvoylglucosamine reductase of Sinorhizobium fredii (strain NBRC 101917 / NGR234).